The primary structure comprises 257 residues: Non-homologous end joining protein Ku (257 aa).

The 176-residue stretch at 9–184 (TFGMVAIPIG…YTKPEVNEQE (176 aa)) folds into the Ku domain.

This sequence belongs to the prokaryotic Ku family. As to quaternary structure, homodimer. Interacts with LigD.

With LigD forms a non-homologous end joining (NHEJ) DNA repair enzyme, which repairs dsDNA breaks with reduced fidelity. Binds linear dsDNA with 5'- and 3'- overhangs but not closed circular dsDNA nor ssDNA. Recruits and stimulates the ligase activity of LigD. This Lachnoclostridium phytofermentans (strain ATCC 700394 / DSM 18823 / ISDg) (Clostridium phytofermentans) protein is Non-homologous end joining protein Ku.